Consider the following 84-residue polypeptide: Large ribosomal subunit protein bL27 (84 aa).

Residues 1-21 (MAHKKGGGSTKNGRDSNPKYL) form a disordered region.

Belongs to the bacterial ribosomal protein bL27 family.

The protein is Large ribosomal subunit protein bL27 of Chlorobium phaeovibrioides (strain DSM 265 / 1930) (Prosthecochloris vibrioformis (strain DSM 265)).